The chain runs to 715 residues: Integrator complex subunit 13 (715 aa).

Disordered regions lie at residues 572–612 (KPPE…SERI) and 626–659 (AEVI…SKGP). A Nuclear localization signal (NLS) motif is present at residues 581–591 (KRGRKREDKEE). The tract at residues 658–703 (GPMSLLSLWSSRINTANSRKHQEFVGRLNSVNNKAELYQHLKEENG) is cleavage module binding motif (CMBM).

It belongs to the Integrator subunit 13 family. Component of the Integrator complex, composed of core subunits INTS1, INTS2, INTS3, INTS4, INTS5, INTS6, INTS7, INTS8, INTS9/RC74, INTS10, INTS11/CPSF3L, INTS12, INTS13, INTS14 and INTS15. The core complex associates with protein phosphatase 2A subunits PPP2CA and PPP2R1A, to form the Integrator-PP2A (INTAC) complex. INTS13 is part of the tail subcomplex, composed of INTS10, INTS13, INTS14 and INTS15.

Its subcellular location is the nucleus. It is found in the cytoplasm. Component of the integrator complex, a multiprotein complex that terminates RNA polymerase II (Pol II) transcription in the promoter-proximal region of genes. The integrator complex provides a quality checkpoint during transcription elongation by driving premature transcription termination of transcripts that are unfavorably configured for transcriptional elongation: the complex terminates transcription by (1) catalyzing dephosphorylation of the C-terminal domain (CTD) of Pol II subunit POLR2A/RPB1 and SUPT5H/SPT5, (2) degrading the exiting nascent RNA transcript via endonuclease activity and (3) promoting the release of Pol II from bound DNA. The integrator complex is also involved in terminating the synthesis of non-coding Pol II transcripts, such as enhancer RNAs (eRNAs), small nuclear RNAs (snRNAs), telomerase RNAs and long non-coding RNAs (lncRNAs). Within the integrator complex, INTS13 is part of the integrator tail module and acts as a platform for the recruitment of transcription factors at promoters. Plays a role in gastrulation and early embryogenesis. The chain is Integrator complex subunit 13 from Xenopus laevis (African clawed frog).